The sequence spans 336 residues: Ribosomal RNA large subunit methyltransferase F (336 aa).

Belongs to the methyltransferase superfamily. METTL16/RlmF family.

It localises to the cytoplasm. The enzyme catalyses adenosine(1618) in 23S rRNA + S-adenosyl-L-methionine = N(6)-methyladenosine(1618) in 23S rRNA + S-adenosyl-L-homocysteine + H(+). In terms of biological role, specifically methylates the adenine in position 1618 of 23S rRNA. This chain is Ribosomal RNA large subunit methyltransferase F, found in Yersinia pestis bv. Antiqua (strain Nepal516).